The chain runs to 811 residues: Serine/threonine-protein kinase prpf4B (811 aa).

4 disordered regions span residues 1 to 257 (MVIE…TNEP), 288 to 341 (EKYN…NQIE), 353 to 379 (KDQN…EDLK), and 408 to 452 (VSIK…TNGG). A compositionally biased stretch (low complexity) spans 46 to 71 (SSPASRETSSSKLMSPSKNQSSSSSR). Residues 81–202 (RRKDERYSSS…DNMDSRDNKN (122 aa)) are compositionally biased toward basic and acidic residues. Residues 203-215 (GSRQSINNNTLSY) show a composition bias toward polar residues. Basic and acidic residues predominate over residues 217–240 (KQADRKDEVRVKDNISVNDDKTNH). Polar residues-rich tracts occupy residues 241-257 (GENL…TNEP) and 293-302 (EQPQPITSSL). Residues 310–327 (SNTNTNSNSTPVATTTTS) are compositionally biased toward low complexity. A Protein kinase domain is found at 490 to 808 (YQIFSPIGSG…PFEALNHEFL (319 aa)). ATP contacts are provided by residues 496-504 (IGSGVFSTV) and Lys-519. The active-site Proton acceptor is Asp-619.

Belongs to the protein kinase superfamily. CMGC Ser/Thr protein kinase family. In terms of processing, phosphorylated. Autophosphorylated; phosphorylation inhibits interaction with its targets.

The protein resides in the nucleus. It localises to the chromosome. It is found in the centromere. The protein localises to the kinetochore. The catalysed reaction is L-seryl-[protein] + ATP = O-phospho-L-seryl-[protein] + ADP + H(+). It carries out the reaction L-threonyl-[protein] + ATP = O-phospho-L-threonyl-[protein] + ADP + H(+). Serine/threonine kinase involved in spliceosomal assembly as well as mitosis and signaling regulation. The protein is Serine/threonine-protein kinase prpf4B (prp4k) of Dictyostelium discoideum (Social amoeba).